A 635-amino-acid polypeptide reads, in one-letter code: Threonine--tRNA ligase (635 aa).

One can recognise a TGS domain in the interval 1–61 (MIVITLPDGS…EGDARLAIVT (61 aa)). The segment at 242–533 (DHRKLGRELD…LIEQHAGALP (292 aa)) is catalytic. Cys-333, His-384, and His-510 together coordinate Zn(2+).

This sequence belongs to the class-II aminoacyl-tRNA synthetase family. In terms of assembly, homodimer. Zn(2+) serves as cofactor.

It localises to the cytoplasm. It catalyses the reaction tRNA(Thr) + L-threonine + ATP = L-threonyl-tRNA(Thr) + AMP + diphosphate + H(+). In terms of biological role, catalyzes the attachment of threonine to tRNA(Thr) in a two-step reaction: L-threonine is first activated by ATP to form Thr-AMP and then transferred to the acceptor end of tRNA(Thr). Also edits incorrectly charged L-seryl-tRNA(Thr). The chain is Threonine--tRNA ligase from Methylibium petroleiphilum (strain ATCC BAA-1232 / LMG 22953 / PM1).